The sequence spans 330 residues: DNA-directed RNA polymerase subunit alpha (330 aa).

The tract at residues 1–232 is alpha N-terminal domain (alpha-NTD); it reads MAILAFQKPD…YHFMLFSDEK (232 aa). Positions 248–330 are alpha C-terminal domain (alpha-CTD); the sequence is EEVLHMRQLL…DISKYKLDKE (83 aa).

The protein belongs to the RNA polymerase alpha chain family. In terms of assembly, homodimer. The RNAP catalytic core consists of 2 alpha, 1 beta, 1 beta' and 1 omega subunit. When a sigma factor is associated with the core the holoenzyme is formed, which can initiate transcription.

It carries out the reaction RNA(n) + a ribonucleoside 5'-triphosphate = RNA(n+1) + diphosphate. Its function is as follows. DNA-dependent RNA polymerase catalyzes the transcription of DNA into RNA using the four ribonucleoside triphosphates as substrates. The sequence is that of DNA-directed RNA polymerase subunit alpha from Bacteroides fragilis (strain ATCC 25285 / DSM 2151 / CCUG 4856 / JCM 11019 / LMG 10263 / NCTC 9343 / Onslow / VPI 2553 / EN-2).